The primary structure comprises 333 residues: Glyceraldehyde-3-phosphate dehydrogenase (333 aa).

Residues 11–12, Asp35, Met79, and Ser121 contribute to the NAD(+) site; that span reads RI. Residues 150–152, Thr181, 210–211, and Arg233 contribute to the D-glyceraldehyde 3-phosphate site; these read SCT and TG. The Nucleophile role is filled by Cys151. Asn315 contributes to the NAD(+) binding site.

The protein belongs to the glyceraldehyde-3-phosphate dehydrogenase family. In terms of assembly, homotetramer.

It localises to the cytoplasm. The enzyme catalyses D-glyceraldehyde 3-phosphate + phosphate + NAD(+) = (2R)-3-phospho-glyceroyl phosphate + NADH + H(+). The protein operates within carbohydrate degradation; glycolysis; pyruvate from D-glyceraldehyde 3-phosphate: step 1/5. Functionally, catalyzes the oxidative phosphorylation of glyceraldehyde 3-phosphate (G3P) to 1,3-bisphosphoglycerate (BPG) using the cofactor NAD. The first reaction step involves the formation of a hemiacetal intermediate between G3P and a cysteine residue, and this hemiacetal intermediate is then oxidized to a thioester, with concomitant reduction of NAD to NADH. The reduced NADH is then exchanged with the second NAD, and the thioester is attacked by a nucleophilic inorganic phosphate to produce BPG. The polypeptide is Glyceraldehyde-3-phosphate dehydrogenase (gap) (Bacteroides fragilis (strain YCH46)).